We begin with the raw amino-acid sequence, 73 residues long: uncharacterized protein (73 aa).

A run of 2 helical transmembrane segments spans residues 7 to 27 (LFSS…IPNL) and 47 to 67 (YFGY…IIIL).

The protein resides in the cell membrane. This is an uncharacterized protein from Methanocaldococcus jannaschii (strain ATCC 43067 / DSM 2661 / JAL-1 / JCM 10045 / NBRC 100440) (Methanococcus jannaschii).